The following is a 272-amino-acid chain: Phosphate import ATP-binding protein PstB (272 aa).

The 242-residue stretch at 26–267 (LEIRNLDLSY…PRKRKTEDYI (242 aa)) folds into the ABC transporter domain. An ATP-binding site is contributed by 58-65 (GPSGCGKS).

This sequence belongs to the ABC transporter superfamily. Phosphate importer (TC 3.A.1.7) family. As to quaternary structure, the complex is composed of two ATP-binding proteins (PstB), two transmembrane proteins (PstC and PstA) and a solute-binding protein (PstS).

The protein resides in the cell inner membrane. The enzyme catalyses phosphate(out) + ATP + H2O = ADP + 2 phosphate(in) + H(+). Functionally, part of the ABC transporter complex PstSACB involved in phosphate import. Responsible for energy coupling to the transport system. The polypeptide is Phosphate import ATP-binding protein PstB (Shewanella denitrificans (strain OS217 / ATCC BAA-1090 / DSM 15013)).